The chain runs to 103 residues: Small ribosomal subunit protein uS10 (103 aa).

It belongs to the universal ribosomal protein uS10 family. In terms of assembly, part of the 30S ribosomal subunit.

Involved in the binding of tRNA to the ribosomes. This chain is Small ribosomal subunit protein uS10, found in Chromobacterium violaceum (strain ATCC 12472 / DSM 30191 / JCM 1249 / CCUG 213 / NBRC 12614 / NCIMB 9131 / NCTC 9757 / MK).